Reading from the N-terminus, the 143-residue chain is D-aminoacyl-tRNA deacylase (143 aa).

The Gly-cisPro motif, important for rejection of L-amino acids signature appears at 135-136 (GP).

The protein belongs to the DTD family. In terms of assembly, homodimer.

Its subcellular location is the cytoplasm. It carries out the reaction glycyl-tRNA(Ala) + H2O = tRNA(Ala) + glycine + H(+). The enzyme catalyses a D-aminoacyl-tRNA + H2O = a tRNA + a D-alpha-amino acid + H(+). An aminoacyl-tRNA editing enzyme that deacylates mischarged D-aminoacyl-tRNAs. Also deacylates mischarged glycyl-tRNA(Ala), protecting cells against glycine mischarging by AlaRS. Acts via tRNA-based rather than protein-based catalysis; rejects L-amino acids rather than detecting D-amino acids in the active site. By recycling D-aminoacyl-tRNA to D-amino acids and free tRNA molecules, this enzyme counteracts the toxicity associated with the formation of D-aminoacyl-tRNA entities in vivo and helps enforce protein L-homochirality. This Mycobacterium bovis (strain BCG / Pasteur 1173P2) protein is D-aminoacyl-tRNA deacylase.